Reading from the N-terminus, the 330-residue chain is Fructose-1,6-bisphosphatase class 1 (330 aa).

Mg(2+)-binding residues include Glu-84, Asp-103, Leu-105, and Asp-106. Substrate-binding positions include 106-109 (DGSS), Asn-196, and Lys-262. Glu-268 is a binding site for Mg(2+).

This sequence belongs to the FBPase class 1 family. Homotetramer. Mg(2+) is required as a cofactor.

The protein localises to the cytoplasm. It carries out the reaction beta-D-fructose 1,6-bisphosphate + H2O = beta-D-fructose 6-phosphate + phosphate. It participates in carbohydrate biosynthesis; gluconeogenesis. The protein is Fructose-1,6-bisphosphatase class 1 of Shewanella sp. (strain W3-18-1).